The primary structure comprises 358 residues: MAISRLIINHFRNLTAIDLEFERGFNFIIGNNGSGKTSLLEAIFYLGHGRSFKSAVANRIISYQQPHFILHGKIQEQQHQWSVGLQKQRQGNTLMKINGEDAKKISDLAHLLPMQLITPEGLTLLNGGPSYRRAYLDWGLFHHNASFYNAWSSLNRLLKQRNSALQQVCSYEKLKIWDRELTKLAYQVSYWREAYAEALRSEIEKTCQLFLPELEISVSFHQGWDKNMDYADLLQQNFERDRALGYTFSGPQKADFRFKANGLPVEDILSRGQLKLLMCALRLAQGEHLMQQKKRHCIFLLDDFASELDQYKRTLLAERLQKNGSQVFVTAITQEQLQQIQPEKHRTFYLENGRIKDL.

30 to 37 (GNNGSGKT) provides a ligand contact to ATP.

It belongs to the RecF family.

The protein localises to the cytoplasm. The RecF protein is involved in DNA metabolism; it is required for DNA replication and normal SOS inducibility. RecF binds preferentially to single-stranded, linear DNA. It also seems to bind ATP. The polypeptide is DNA replication and repair protein RecF (Histophilus somni (strain 129Pt) (Haemophilus somnus)).